Here is a 265-residue protein sequence, read N- to C-terminus: MRQLCLSTALLFLLVILVDSTPLNIYHIQDEGLETSHRRGPEKRSVIDVVSGIINGVATGTKIIEKGAGILTGLAEIITKAIKGQVMISRIQFDNHTLEELPTLQLEYSTLSEENNGLKTSHRRGLEKRSVTDVVTSIINGVATGTKIIEKGAGILTGLAEIITKAIKGQVMISGIQFDNHTLEEYQTLKIEYSTLSEENKASKPALCLEPKVTGDCNATMTRYFYNTQTGLCEQFVYTGCEGNGNNFENLEDCMKTCSQEAGSL.

The signal sequence occupies residues 1–20 (MRQLCLSTALLFLLVILVDS). 2 tandem repeats follow at residues 32-115 (GLET…SEEN) and 117-200 (GLKT…SEEN). A 2 X 84 AA approximate repeats region spans residues 32-200 (GLETSHRRGP…IEYSTLSEEN (169 aa)). N-linked (GlcNAc...) asparagine glycans are attached at residues Asn-95, Asn-180, and Asn-218. In terms of domain architecture, BPTI/Kunitz inhibitor spans 208 to 258 (CLEPKVTGDCNATMTRYFYNTQTGLCEQFVYTGCEGNGNNFENLEDCMKTC). Cystine bridges form between Cys-208-Cys-258, Cys-217-Cys-241, and Cys-233-Cys-254.

In terms of tissue distribution, expressed only in the trophectoderm, which forms the outer epithelial layer of the trophoblast.

Its subcellular location is the secreted. May play a role in mediating maternal-conceptus interactions in the immediate preimplantation period. Does not seem to have proteinase inhibitory activity. The sequence is that of Trophoblast Kunitz domain protein 1 (TKDP1) from Ovis aries (Sheep).